Reading from the N-terminus, the 784-residue chain is Cadherin-15 (784 aa).

An N-terminal signal peptide occupies residues 1-21 (MGSALLLALGLLAQSLGLSWA). Residues 22-59 (VPEPKPSTLYPWRRASAPGRVRRAWVIPPISVSENHKR) constitute a propeptide that is removed on maturation. Cadherin domains follow at residues 60-151 (LPYP…RPAF), 152-259 (LQDV…APEF), 260-374 (TKDE…APVF), 375-480 (PENP…DHAP), and 481-589 (ALAL…TCLP). Residues 60–605 (LPYPLVQIKS…GGGVGVSLGA (546 aa)) lie on the Extracellular side of the membrane. 2 N-linked (GlcNAc...) asparagine glycosylation sites follow: N106 and N226. 3 N-linked (GlcNAc...) asparagine glycosylation sites follow: N530, N537, and N575. The helical transmembrane segment at 606-625 (LVIVLASTVVLLVLILLAAL) threads the bilayer. At 626–784 (RTRFRGHSRG…ARLADMYGHQ (159 aa)) the chain is on the cytoplasmic side. Residues 676-700 (EPRATSRSLGRPPLRRDAPFSYVPQ) form a disordered region.

In terms of tissue distribution, skeletal muscle.

The protein localises to the cell membrane. Its function is as follows. Cadherins are calcium-dependent cell adhesion proteins. They preferentially interact with themselves in a homophilic manner in connecting cells; cadherins may thus contribute to the sorting of heterogeneous cell types. M-cadherin is part of the myogenic program and may provide a trigger for terminal muscle differentiation. The sequence is that of Cadherin-15 (Cdh15) from Mus musculus (Mouse).